A 421-amino-acid chain; its full sequence is ATP phosphoribosyltransferase regulatory subunit (421 aa).

The protein belongs to the class-II aminoacyl-tRNA synthetase family. HisZ subfamily. In terms of assembly, heteromultimer composed of HisG and HisZ subunits.

The protein localises to the cytoplasm. Its pathway is amino-acid biosynthesis; L-histidine biosynthesis; L-histidine from 5-phospho-alpha-D-ribose 1-diphosphate: step 1/9. In terms of biological role, required for the first step of histidine biosynthesis. May allow the feedback regulation of ATP phosphoribosyltransferase activity by histidine. The chain is ATP phosphoribosyltransferase regulatory subunit from Clostridium novyi (strain NT).